We begin with the raw amino-acid sequence, 215 residues long: Ribose-5-phosphate isomerase A (215 aa).

Substrate contacts are provided by residues 26-29 (TGST), 79-82 (DGAD), and 92-95 (KGGG). E101 (proton acceptor) is an active-site residue. K119 provides a ligand contact to substrate.

Belongs to the ribose 5-phosphate isomerase family. In terms of assembly, homodimer.

It carries out the reaction aldehydo-D-ribose 5-phosphate = D-ribulose 5-phosphate. It functions in the pathway carbohydrate degradation; pentose phosphate pathway; D-ribose 5-phosphate from D-ribulose 5-phosphate (non-oxidative stage): step 1/1. Functionally, catalyzes the reversible conversion of ribose-5-phosphate to ribulose 5-phosphate. This Xylella fastidiosa (strain M12) protein is Ribose-5-phosphate isomerase A.